A 299-amino-acid polypeptide reads, in one-letter code: uncharacterized protein (299 aa).

This is an uncharacterized protein from Bacillus subtilis (strain 168).